The primary structure comprises 256 residues: Small ribosomal subunit protein eS1 (256 aa).

Alanine 2 is subject to N-acetylalanine; partial.

It belongs to the eukaryotic ribosomal protein eS1 family. As to quaternary structure, component of the small ribosomal subunit. Mature ribosomes consist of a small (40S) and a large (60S) subunit. The 40S subunit contains about 33 different proteins and 1 molecule of RNA (18S). The 60S subunit contains about 49 different proteins and 3 molecules of RNA (25S, 5.8S and 5S).

Its subcellular location is the cytoplasm. The polypeptide is Small ribosomal subunit protein eS1 (rps1) (Botryotinia fuckeliana (strain B05.10) (Noble rot fungus)).